The following is a 332-amino-acid chain: Adenosine receptor A2b (332 aa).

The Extracellular segment spans residues 1 to 8 (MPLEAQDA). A helical transmembrane segment spans residues 9–33 (VYVALELALAALSVTGNVLVCAAVG). Residues 34 to 43 (TSSALQTPTN) are Cytoplasmic-facing. The helical transmembrane segment at 44–67 (YFLVSLAAADVAVGLFAIPFAVTI) threads the bilayer. Over 68-78 (SLGFCTDFHSC) the chain is Extracellular. A disulfide bond links cysteine 78 and cysteine 170. Residues 79–101 (LFLACFVLVLTQSSIFSLLAVAV) traverse the membrane as a helical segment. Topologically, residues 102 to 121 (DRYLAVRVPLRYKSLVTGAR) are cytoplasmic. A helical membrane pass occupies residues 122 to 144 (ARGVIAALWVLAFGIGLTPFLGW). At 145-177 (NDRKIATNCTEPGDAATNVSCCLIRCLFENVVP) the chain is on the extracellular side. N-linked (GlcNAc...) asparagine glycosylation is found at asparagine 152 and asparagine 162. Glutamate 173 contacts adenosine. The chain crosses the membrane as a helical span at residues 178 to 202 (MSYMVYFNFFGCVLPPLLIMLVIYV). Residues 203 to 234 (KIFLVACRQLQRTELMDHSRTVLQREIHAAKS) lie on the Cytoplasmic side of the membrane. The helical transmembrane segment at 235–258 (LALIVGIFALCWLPVHTINCASLF) threads the bilayer. Asparagine 253 provides a ligand contact to adenosine. Topologically, residues 259–266 (QPTWAKVK) are extracellular. Residues 267–290 (PKWAINTAILLSHANSAVNPIVYA) traverse the membrane as a helical segment. 2 residues coordinate adenosine: serine 278 and histidine 279. At 291–332 (YRNRDFRYTFHKIISRYILCRTHILKSGEGQVGSQPTLQLGL) the chain is on the cytoplasmic side. Cysteine 310 is lipidated: S-palmitoyl cysteine.

Belongs to the G-protein coupled receptor 1 family.

The protein localises to the cell membrane. Its function is as follows. Receptor for adenosine. The activity of this receptor is mediated by G proteins which activate adenylyl cyclase. The protein is Adenosine receptor A2b (ADORA2B) of Bos taurus (Bovine).